The following is a 109-amino-acid chain: Protein AC78 (109 aa).

Residues G61–I81 form a helical membrane-spanning segment.

It is found in the host membrane. The protein localises to the virion. Functionally, plays an essential role in budded virus production and occlusion body formation. The polypeptide is Protein AC78 (AC78) (Autographa californica nuclear polyhedrosis virus (AcMNPV)).